Consider the following 301-residue polypeptide: Phomoidride biosynthesis cluster protein F (301 aa).

Functionally, part of the gene cluster that mediates the biosynthesis of the antihypercholesterolemic agents phomoidrides which are dimeric anhydrides. The function of phiF within the pathway has still to be determined. The pathway begins with the highly reducing polyketide synthase phiA that catalyzes the formation of a C12-fatty acyl-ACP, starting from one acetate and 5 malonate units. The hydrolase phiM is involved in the release of the C12-fatty acyl chain from phiA. The alkylcitrate synthase (ACS) phiJ and the alkylcitrate dehydratase (ACDH) phiI then give rise to decarboxylated monomeric anhydrides by coupling the C12-fatty acyl chain with oxalacetic acid. The cyclase phiC is responsible for the dimerization of the monomeric anhydrides which leads to the production of prephomoidride that contains the characteristic bicyclo[4.3.1]deca-1,6-diene system of phomoidrides. Iterative oxidation catalyzed by the alpha-ketoglutarate-dependent dioxygenase phiK produced then phomoidride A. Finally, the methyltransferase phiE converts phomoidride A to phomoidride B via an acetalization reaction. The phosphatidylethanolamine-binding protein phiB and phiN are not essential for dimerization and their functions have still to be determined. The sequence is that of Phomoidride biosynthesis cluster protein F from Fungal sp. (strain ATCC 74256).